Reading from the N-terminus, the 238-residue chain is Enoyl-CoA delta isomerase 3 (238 aa).

This sequence belongs to the enoyl-CoA hydratase/isomerase family.

Its subcellular location is the cytoplasm. It localises to the nucleus. It catalyses the reaction a (3Z)-enoyl-CoA = a 4-saturated (2E)-enoyl-CoA. The enzyme catalyses a (3E)-enoyl-CoA = a 4-saturated (2E)-enoyl-CoA. Its pathway is lipid metabolism; fatty acid beta-oxidation. Able to isomerize both 3-cis and 3-trans double bonds into the 2-trans form in a range of enoyl-CoA species. Essential for the beta oxidation of unsaturated fatty acids. This is Enoyl-CoA delta isomerase 3 from Arabidopsis thaliana (Mouse-ear cress).